Here is a 505-residue protein sequence, read N- to C-terminus: Prenylcysteine oxidase 1 (505 aa).

The N-terminal stretch at 1–27 (MGRVVAELVSSLLGLWLLLCSCGCPEG) is a signal peptide. N-linked (GlcNAc...) asparagine glycans are attached at residues asparagine 196, asparagine 323, and asparagine 353.

This sequence belongs to the prenylcysteine oxidase family. The cofactor is FAD. In terms of tissue distribution, widely expressed.

The protein localises to the lysosome. The catalysed reaction is an S-polyprenyl-L-cysteine + O2 + H2O = a polyprenal + L-cysteine + H2O2. The enzyme catalyses S-(2E,6E)-farnesyl-L-cysteine + O2 + H2O = (2E,6E)-farnesal + L-cysteine + H2O2. It carries out the reaction [(2E,6E,10E)-geranylgeranyl]-L-cysteine + O2 + H2O = (2E,6E,10E)-geranylgeranial + L-cysteine + H2O2. In terms of biological role, prenylcysteine oxidase that cleaves the thioether bond of prenyl-L-cysteines, such as farnesylcysteine and geranylgeranylcysteine. Only active against free prenylcysteines and not prenylcysteine residues within prenylated proteins or peptides. Involved in the final step in the degradation of prenylated proteins, by degrading prenylcysteines after the protein has been degraded. The polypeptide is Prenylcysteine oxidase 1 (Homo sapiens (Human)).